A 182-amino-acid polypeptide reads, in one-letter code: Late embryogenesis abundant protein 3 (182 aa).

Positions 1–51 are disordered; it reads MAQHQHSPQRPRDQDNTRPHDQYGIVFSVSGDDVARKQGDSFSQPDPTVAT. Positions 7 to 11 match the Nuclear localization signal (NLS) motif; it reads SPQRP. A compositionally biased stretch (basic and acidic residues) spans 10 to 21; sequence RPRDQDNTRPHD. 2 SMP domains span residues 58-115 and 123-181; these read VTIG…TNEQ and VNIA…LNQQ. A disordered region spans residues 145–182; it reads EDAEAVVGAELRSSSEMKTTPGGVADSMSAGARLNQQL.

The protein belongs to the LEA type SMP family.

It is found in the cytoplasm. The protein resides in the nucleus. In terms of biological role, LEA proteins are late embryonic proteins abundant in higher plant seed embryos. The function of those proteins is not known. This chain is Late embryogenesis abundant protein 3, found in Arabidopsis thaliana (Mouse-ear cress).